The primary structure comprises 157 residues: Transcription elongation factor GreA (157 aa).

Residues 1-24 (MDKFPMTPEGYHALDEELKRRQQE) form a disordered region. The span at 12 to 24 (HALDEELKRRQQE) shows a compositional bias: basic and acidic residues. Residues 53 to 73 (EAQSLNEGRIAELEDKLSRAE) are a coiled coil.

It belongs to the GreA/GreB family.

Necessary for efficient RNA polymerase transcription elongation past template-encoded arresting sites. The arresting sites in DNA have the property of trapping a certain fraction of elongating RNA polymerases that pass through, resulting in locked ternary complexes. Cleavage of the nascent transcript by cleavage factors such as GreA or GreB allows the resumption of elongation from the new 3'terminus. GreA releases sequences of 2 to 3 nucleotides. In Beijerinckia indica subsp. indica (strain ATCC 9039 / DSM 1715 / NCIMB 8712), this protein is Transcription elongation factor GreA.